Reading from the N-terminus, the 567-residue chain is Zinc finger protein 143 (567 aa).

7 consecutive C2H2-type zinc fingers follow at residues Phe230–His254, Tyr260–His284, Tyr290–His314, Phe320–His344, Tyr350–His374, Tyr380–His404, and Tyr410–His433. Positions Ser506–Gly520 are enriched in polar residues. Positions Ser506–Pro525 are disordered.

The protein belongs to the GLI C2H2-type zinc-finger protein family.

The protein resides in the nucleus. In terms of biological role, transcriptional activator. Activates the gene for selenocysteine tRNA (tRNAsec). Binds to the activator element (AE) motif of the selenocysteine tRNA gene promoter. In Xenopus tropicalis (Western clawed frog), this protein is Zinc finger protein 143 (znf143).